The chain runs to 144 residues: Large ribosomal subunit protein uL15 (144 aa).

Positions 1 to 53 (MFLNTIKPGEGAKHAKRRVGRGIGSGLGKTAGRGHKGQKSRSGGFHKVGFEGG) are disordered. Over residues 21–31 (RGIGSGLGKTA) the composition is skewed to gly residues.

Belongs to the universal ribosomal protein uL15 family. As to quaternary structure, part of the 50S ribosomal subunit.

Binds to the 23S rRNA. The polypeptide is Large ribosomal subunit protein uL15 (Laribacter hongkongensis (strain HLHK9)).